A 56-amino-acid chain; its full sequence is Small integral membrane protein 39 (56 aa).

The helical transmembrane segment at 33 to 53 threads the bilayer; sequence VVVSAVLALLVLINVVLIFLL.

It is found in the membrane. This chain is Small integral membrane protein 39, found in Homo sapiens (Human).